Reading from the N-terminus, the 30-residue chain is Platelet factor 4 (30 aa).

This sequence belongs to the intercrine alpha (chemokine CxC) family. In terms of assembly, homotetramer. Interacts with TNFAIP6 (via Link domain). Interacts with CCR1. Interacts with CXCR3. In terms of processing, binds non-covalently to a proteoglycan molecule.

It localises to the secreted. Chemokine released during platelet aggregation that plays a role in different biological processes including hematopoiesis, cell proliferation, differentiation, and activation. Acts via different functional receptors including CCR1, CXCR3A or CXCR3B. Upon interaction with CXCR3A receptor, induces activated T-lymphocytes migration mediated via downstream Ras/extracellular signal-regulated kinase (ERK) signaling. Neutralizes the anticoagulant effect of heparin by binding more strongly to heparin than to the chondroitin-4-sulfate chains of the carrier molecule. Plays a role in the inhibition of hematopoiesis and in the maintenance of hematopoietic stem cell (HSC) quiescence. Chemotactic for neutrophils and monocytes via CCR1. Inhibits endothelial cell proliferation. In cooperation with toll-like receptor 8/TLR8, induces chromatin remodeling and activates inflammatory gene expression via the TBK1-IRF5 axis. In addition, induces myofibroblast differentiation and collagen synthesis in different precursor cells, including endothelial cells, by stimulating endothelial-to-mesenchymal transition. The sequence is that of Platelet factor 4 (PF4) from Oryctolagus cuniculus (Rabbit).